Here is a 253-residue protein sequence, read N- to C-terminus: Succinate dehydrogenase [ubiquinone] iron-sulfur subunit, mitochondrial (253 aa).

In terms of domain architecture, 2Fe-2S ferredoxin-type spans 23–114 (FKIYRWNPDK…TTKIYPLPHM (92 aa)). Positions 74, 79, 82, and 94 each coordinate [2Fe-2S] cluster. The 4Fe-4S ferredoxin-type domain occupies 156 to 186 (DRKKLDGLYECILCACCSTSCPSYWWNQEEY). The [4Fe-4S] cluster site is built by cysteine 166, cysteine 169, and cysteine 172. Cysteine 176 provides a ligand contact to [3Fe-4S] cluster. Position 181 (tryptophan 181) interacts with a ubiquinone. Positions 223 and 229 each coordinate [3Fe-4S] cluster. Position 233 (cysteine 233) interacts with [4Fe-4S] cluster.

Belongs to the succinate dehydrogenase/fumarate reductase iron-sulfur protein family. In terms of assembly, component of complex II composed of four subunits: a flavoprotein (FP), an iron-sulfur protein (IP), and a cytochrome b composed of a large and a small subunit. The cofactor is [2Fe-2S] cluster. [3Fe-4S] cluster is required as a cofactor. Requires [4Fe-4S] cluster as cofactor.

It is found in the mitochondrion inner membrane. The enzyme catalyses a quinone + succinate = fumarate + a quinol. Its pathway is carbohydrate metabolism; tricarboxylic acid cycle; fumarate from succinate (eukaryal route): step 1/1. Iron-sulfur protein (IP) subunit of succinate dehydrogenase (SDH) that is involved in complex II of the mitochondrial electron transport chain and is responsible for transferring electrons from succinate to ubiquinone (coenzyme Q). This is Succinate dehydrogenase [ubiquinone] iron-sulfur subunit, mitochondrial (SDH2) from Candida glabrata (strain ATCC 2001 / BCRC 20586 / JCM 3761 / NBRC 0622 / NRRL Y-65 / CBS 138) (Yeast).